We begin with the raw amino-acid sequence, 406 residues long: Prisilkin-39 (406 aa).

Residues 1 to 19 form the signal peptide; that stretch reads MKGFLTLLLVCAILSTGYC. The next 2 membrane-spanning stretches (helical) occupy residues 26–48 and 58–80; these read ALTG…GAGA and VGVG…YGGY. A 10 X 12 AA tandem repeat of G-G-Y-[SG]-G-Y-[GS]-Y-G-Y-P-[AT] region spans residues 78–197; it reads GGYSGYGYGY…YSGYSYGYPT (120 aa).

Expression is confined to the prism and organic layers of the shell with no expression detected in the nacreous shell layer. Also expressed in the mantle edge, extrapallial fluid, hemolymph and, to a lesser extent, in the viscus (at protein level). In the mantle, localizes to inner epithelial cells of the outer fold and the outer epithelial cells of the middle fold at the bottom of the periostracal groove.

It is found in the membrane. Binds chitin and may serve as a framework constituent participating in shell formation. Inhibits aragonite precipitation and may regulate aragonite growth during shell layer formation. Does not affect calcite crystallization. This chain is Prisilkin-39, found in Pinctada fucata (Akoya pearl oyster).